The sequence spans 621 residues: Glutamine--fructose-6-phosphate aminotransferase [isomerizing] (621 aa).

C2 serves as the catalytic Nucleophile; for GATase activity. Positions 2–223 (CGIIGYVGEG…DRELGIISIS (222 aa)) constitute a Glutamine amidotransferase type-2 domain. SIS domains are found at residues 289-436 (LHLE…HKFT) and 470-611 (LSKQ…IDKP). K616 (for Fru-6P isomerization activity) is an active-site residue.

In terms of assembly, homodimer.

The protein localises to the plastid. The protein resides in the chloroplast. The catalysed reaction is D-fructose 6-phosphate + L-glutamine = D-glucosamine 6-phosphate + L-glutamate. Functionally, catalyzes the first step in hexosamine metabolism, converting fructose-6P into glucosamine-6P using glutamine as a nitrogen source. This is Glutamine--fructose-6-phosphate aminotransferase [isomerizing] from Cyanidium caldarium (Red alga).